The primary structure comprises 460 residues: Bifunctional protein GlmU (460 aa).

Residues 1–235 (MTLTAAIVLA…PLSVEGVNDR (235 aa)) are pyrophosphorylase. UDP-N-acetyl-alpha-D-glucosamine-binding positions include 9-12 (LAAG), Lys-23, Gln-76, and 81-82 (GT). Asp-109 serves as a coordination point for Mg(2+). Residues Gly-146, Glu-161, Asn-176, and Asn-233 each contribute to the UDP-N-acetyl-alpha-D-glucosamine site. Asn-233 is a Mg(2+) binding site. Residues 236–256 (VQLASLAKAHNLRVCRQWMLD) form a linker region. An N-acetyltransferase region spans residues 257–460 (GVTIVDPQTT…VDNWKPAWER (204 aa)). Residues Arg-338 and Lys-356 each contribute to the UDP-N-acetyl-alpha-D-glucosamine site. The active-site Proton acceptor is His-368. Positions 371 and 382 each coordinate UDP-N-acetyl-alpha-D-glucosamine. Acetyl-CoA contacts are provided by residues 391 to 392 (NY) and Ala-428.

In the N-terminal section; belongs to the N-acetylglucosamine-1-phosphate uridyltransferase family. This sequence in the C-terminal section; belongs to the transferase hexapeptide repeat family. In terms of assembly, homotrimer. Mg(2+) is required as a cofactor.

It localises to the cytoplasm. It catalyses the reaction alpha-D-glucosamine 1-phosphate + acetyl-CoA = N-acetyl-alpha-D-glucosamine 1-phosphate + CoA + H(+). The enzyme catalyses N-acetyl-alpha-D-glucosamine 1-phosphate + UTP + H(+) = UDP-N-acetyl-alpha-D-glucosamine + diphosphate. It participates in nucleotide-sugar biosynthesis; UDP-N-acetyl-alpha-D-glucosamine biosynthesis; N-acetyl-alpha-D-glucosamine 1-phosphate from alpha-D-glucosamine 6-phosphate (route II): step 2/2. Its pathway is nucleotide-sugar biosynthesis; UDP-N-acetyl-alpha-D-glucosamine biosynthesis; UDP-N-acetyl-alpha-D-glucosamine from N-acetyl-alpha-D-glucosamine 1-phosphate: step 1/1. The protein operates within bacterial outer membrane biogenesis; LPS lipid A biosynthesis. Functionally, catalyzes the last two sequential reactions in the de novo biosynthetic pathway for UDP-N-acetylglucosamine (UDP-GlcNAc). The C-terminal domain catalyzes the transfer of acetyl group from acetyl coenzyme A to glucosamine-1-phosphate (GlcN-1-P) to produce N-acetylglucosamine-1-phosphate (GlcNAc-1-P), which is converted into UDP-GlcNAc by the transfer of uridine 5-monophosphate (from uridine 5-triphosphate), a reaction catalyzed by the N-terminal domain. The protein is Bifunctional protein GlmU of Bifidobacterium animalis subsp. lactis (strain AD011).